The primary structure comprises 156 residues: MSRRHSAEKREINPDPKFGDLVVTKFMNAIMLHGKKSVAESIVYGAFDVVQGKTKQEPLGVFHSALDNVAPHVEVRSRRVGGATYQVPVDVRPERRQALAIRWLITAARKRNETTMVDRLSGELMDAANNRGSAVKKREDTHKMADANRAFSHYRW.

This sequence belongs to the universal ribosomal protein uS7 family. Part of the 30S ribosomal subunit. Contacts proteins S9 and S11.

Its function is as follows. One of the primary rRNA binding proteins, it binds directly to 16S rRNA where it nucleates assembly of the head domain of the 30S subunit. Is located at the subunit interface close to the decoding center, probably blocks exit of the E-site tRNA. The protein is Small ribosomal subunit protein uS7 of Agrobacterium fabrum (strain C58 / ATCC 33970) (Agrobacterium tumefaciens (strain C58)).